Here is a 77-residue protein sequence, read N- to C-terminus: Large ribosomal subunit protein uL29 (77 aa).

It belongs to the universal ribosomal protein uL29 family.

This Mycobacterium sp. (strain JLS) protein is Large ribosomal subunit protein uL29.